A 72-amino-acid chain; its full sequence is MPKSDIHPTWFENTKVLCDGKPLCLIGSTKSELQIDMWLANHPFYTNSQVLIDSEGRVEKFMKKYRLDITEQ.

The protein belongs to the bacterial ribosomal protein bL31 family. Type A subfamily. In terms of assembly, part of the 50S ribosomal subunit.

Its subcellular location is the plastid. The protein localises to the chloroplast. Binds the 23S rRNA. In Phaeodactylum tricornutum (strain CCAP 1055/1), this protein is Large ribosomal subunit protein bL31c (rpl31).